A 137-amino-acid polypeptide reads, in one-letter code: Basic phospholipase A2 homolog APL-K49 (137 aa).

The first 16 residues, 1-16, serve as a signal peptide directing secretion; sequence MRTLWIVALLLVGVEG. Intrachain disulfides connect cysteine 42/cysteine 131, cysteine 44/cysteine 60, cysteine 59/cysteine 111, cysteine 65/cysteine 137, cysteine 66/cysteine 104, cysteine 73/cysteine 97, and cysteine 91/cysteine 102. An important for membrane-damaging activities in eukaryotes and bacteria; heparin-binding region spans residues 121–133; the sequence is KKYKAYFKLKCKK.

The protein belongs to the phospholipase A2 family. Group II subfamily. K49 sub-subfamily. As to quaternary structure, monomer. As to expression, expressed by the venom gland.

Its subcellular location is the secreted. Its function is as follows. Snake venom phospholipase A2 (PLA2) that lacks enzymatic activity. Does not show antibacterial activity. Is myotoxic and displays edema-inducing activities. A model of myotoxic mechanism has been proposed: an apo Lys49-PLA2 is activated by the entrance of a hydrophobic molecule (e.g. fatty acid) at the hydrophobic channel of the protein leading to a reorientation of a monomer. This reorientation causes a transition between 'inactive' to 'active' states, causing alignment of C-terminal and membrane-docking sites (MDoS) side-by-side and putting the membrane-disruption sites (MDiS) in the same plane, exposed to solvent and in a symmetric position for both monomers. The MDoS region stabilizes the toxin on membrane by the interaction of charged residues with phospholipid head groups. Subsequently, the MDiS region destabilizes the membrane with penetration of hydrophobic residues. This insertion causes a disorganization of the membrane, allowing an uncontrolled influx of ions (i.e. calcium and sodium), and eventually triggering irreversible intracellular alterations and cell death. This Agkistrodon piscivorus leucostoma (Western cottonmouth) protein is Basic phospholipase A2 homolog APL-K49.